Here is a 682-residue protein sequence, read N- to C-terminus: DNA-directed RNA polymerase subunit beta' (682 aa).

Zn(2+) contacts are provided by Cys-69, Cys-71, Cys-87, and Cys-90. Positions 489, 491, and 493 each coordinate Mg(2+).

The protein belongs to the RNA polymerase beta' chain family. RpoC1 subfamily. In plastids the minimal PEP RNA polymerase catalytic core is composed of four subunits: alpha, beta, beta', and beta''. When a (nuclear-encoded) sigma factor is associated with the core the holoenzyme is formed, which can initiate transcription. It depends on Mg(2+) as a cofactor. Requires Zn(2+) as cofactor.

It is found in the plastid. The protein localises to the chloroplast. The enzyme catalyses RNA(n) + a ribonucleoside 5'-triphosphate = RNA(n+1) + diphosphate. In terms of biological role, DNA-dependent RNA polymerase catalyzes the transcription of DNA into RNA using the four ribonucleoside triphosphates as substrates. The sequence is that of DNA-directed RNA polymerase subunit beta' from Oryza nivara (Indian wild rice).